Reading from the N-terminus, the 118-residue chain is Large ribosomal subunit protein uL18 (118 aa).

It belongs to the universal ribosomal protein uL18 family. In terms of assembly, part of the 50S ribosomal subunit; part of the 5S rRNA/L5/L18/L25 subcomplex. Contacts the 5S and 23S rRNAs.

Functionally, this is one of the proteins that bind and probably mediate the attachment of the 5S RNA into the large ribosomal subunit, where it forms part of the central protuberance. The chain is Large ribosomal subunit protein uL18 from Sulfurovum sp. (strain NBC37-1).